The sequence spans 410 residues: LL-diaminopimelate aminotransferase (410 aa).

2 residues coordinate substrate: tyrosine 15 and glycine 42. Residues tyrosine 72, 108-109 (TK), tyrosine 132, asparagine 186, tyrosine 217, and 245-247 (SFS) each bind pyridoxal 5'-phosphate. Residues lysine 109, tyrosine 132, and asparagine 186 each contribute to the substrate site. At lysine 248 the chain carries N6-(pyridoxal phosphate)lysine. Residues arginine 256 and asparagine 291 each contribute to the pyridoxal 5'-phosphate site. 2 residues coordinate substrate: asparagine 291 and arginine 387.

Belongs to the class-I pyridoxal-phosphate-dependent aminotransferase family. LL-diaminopimelate aminotransferase subfamily. Homodimer. Pyridoxal 5'-phosphate serves as cofactor.

The enzyme catalyses (2S,6S)-2,6-diaminopimelate + 2-oxoglutarate = (S)-2,3,4,5-tetrahydrodipicolinate + L-glutamate + H2O + H(+). The protein operates within amino-acid biosynthesis; L-lysine biosynthesis via DAP pathway; LL-2,6-diaminopimelate from (S)-tetrahydrodipicolinate (aminotransferase route): step 1/1. In terms of biological role, involved in the synthesis of meso-diaminopimelate (m-DAP or DL-DAP), required for both lysine and peptidoglycan biosynthesis. Catalyzes the direct conversion of tetrahydrodipicolinate to LL-diaminopimelate. In Lawsonia intracellularis (strain PHE/MN1-00), this protein is LL-diaminopimelate aminotransferase.